The following is a 593-amino-acid chain: Pentatricopeptide repeat-containing protein At5g24830 (593 aa).

12 PPR repeats span residues 120 to 154 (CLSI…GVIP), 155 to 189 (GLIT…GPSP), 190 to 224 (NCVS…GIRP), 225 to 256 (NRVT…ILDS), 264 to 298 (DIVI…NVPA), 299 to 333 (DSVV…GVNP), 334 to 368 (DVFT…GVAP), 369 to 403 (DQIS…SLLP), 404 to 438 (EVLL…GVKP), 439 to 473 (NVYT…KIHP), 474 to 508 (DTTT…GCQP), and 509 to 543 (DIIT…GITI).

This sequence belongs to the PPR family. P subfamily.

The chain is Pentatricopeptide repeat-containing protein At5g24830 from Arabidopsis thaliana (Mouse-ear cress).